The following is a 384-amino-acid chain: Lipid-A-disaccharide synthase (384 aa).

The protein belongs to the LpxB family.

The enzyme catalyses a lipid X + a UDP-2-N,3-O-bis[(3R)-3-hydroxyacyl]-alpha-D-glucosamine = a lipid A disaccharide + UDP + H(+). The protein operates within bacterial outer membrane biogenesis; LPS lipid A biosynthesis. Functionally, condensation of UDP-2,3-diacylglucosamine and 2,3-diacylglucosamine-1-phosphate to form lipid A disaccharide, a precursor of lipid A, a phosphorylated glycolipid that anchors the lipopolysaccharide to the outer membrane of the cell. This Geobacter metallireducens (strain ATCC 53774 / DSM 7210 / GS-15) protein is Lipid-A-disaccharide synthase.